The sequence spans 442 residues: tRNA-2-methylthio-N(6)-dimethylallyladenosine synthase (442 aa).

The region spanning 5–122 is the MTTase N-terminal domain; the sequence is KKVFIKTLGC…LPEMIKQKQK (118 aa). [4Fe-4S] cluster is bound by residues C14, C51, C85, C159, C163, and C166. The Radical SAM core domain maps to 145 to 378; it reads KAEGAKAYVS…DLLNSNAQII (234 aa). Residues 380–442 enclose the TRAM domain; sequence RQMVGTNQRI…LPNSLRGELI (63 aa).

The protein belongs to the methylthiotransferase family. MiaB subfamily. In terms of assembly, monomer. [4Fe-4S] cluster serves as cofactor.

It is found in the cytoplasm. The catalysed reaction is N(6)-dimethylallyladenosine(37) in tRNA + (sulfur carrier)-SH + AH2 + 2 S-adenosyl-L-methionine = 2-methylsulfanyl-N(6)-dimethylallyladenosine(37) in tRNA + (sulfur carrier)-H + 5'-deoxyadenosine + L-methionine + A + S-adenosyl-L-homocysteine + 2 H(+). Its function is as follows. Catalyzes the methylthiolation of N6-(dimethylallyl)adenosine (i(6)A), leading to the formation of 2-methylthio-N6-(dimethylallyl)adenosine (ms(2)i(6)A) at position 37 in tRNAs that read codons beginning with uridine. The protein is tRNA-2-methylthio-N(6)-dimethylallyladenosine synthase of Francisella tularensis subsp. holarctica (strain LVS).